The chain runs to 1411 residues: MSLSKYFNPIPDASVTFDGATVQLEESLGAVQNDEESASEFKNVGHLEISDITFRANEGEVVLVLGNPTSALFKGLFHGHKHLKYSPEGSIRFKDNEYKQFASKCPHQIIYNNEQDIHFPYLTVEQTIDFALSCKFHIPKQERIEMRDELLKEFGLSHVKKTYVGNDYVRGVSGGERKRISIIETFIANGSVYLWDNSTKGLDSATALEFLSITQKMAKATRSVNFVKISQASDKIVSKFDKILMLGDSFQVFYGTMEECLTHFHDTLQIKKNPNDCIIEYLTSILNFKFKETSNSIVGLDTPSVVSEENQALNINNETDLHTLWIQSPYYKHWKAITSKTVQECTRKDVNPDDISPIFSIPLKTQLKTCTVRAFERIIGDRNYLISQFVSVVVQSLVIGSLFYNIPLTTIGSFSRGSLTFFSILFFTFLSLADMPASFQRQPVVRKHVQLHFYYNWVETLATNFFDCCSKFILVVIFTIILYFLAHLQYNAARFFIFLLFLSVYNFCMVSLFALTALIAPTLSMANLLAGILLLAIAMYASYVIYMKDMHPWFIWIAYLNPAMFAMEAILSNELFNLKLDCHESIIPRGEYYDNISFSHKACAWQGATLGNDYVRGRDYLKSGLKYTYHHVWRNFGIIIGFLCFFLFCSLLAAEYITPLFTRENLLRWNNYLKRYCPFLNSQKKNNKSAITNNDGVCTPKTPIANFSTSSSSVPSVSHQYDTDYNIKHPDETVNNHTKESVAMETQKHVISWKNINYTIGDKKLINDASGYISSGLTALMGESGAGKTTLLNVLSQRTESGVVTGELLIDGQPLTNIDAFRRSIGFVQQQDVHLELLTVRESLEISCVLRGDGDRDYLGVVSNLLRLPSEKLVADLSPTQRKLLSIGVELVTKPSLLLFLDEPTSGLDAEAALTIVQFLKKLSMQGQAILCTIHQPSKSVISYFDNIYLLKRGGECVYFGSLPNACDYFVAHDRRLTFDREMDNPADFVIDVVGSGSTNIPMDDAEKPTSSKIDEPVSYHKQSDSINWAELWQSSPEKVRVADDLLLLEEEARKSGVDFTTSVWSPPSYMEQIKLITKRQYICTKRDMTYVFAKYALNAGAGLFIGFSFWRTKHNINGLQDAIFLCFMMLCVSSPLINQVQDKALQSKEVYIAREARSNTYHWTVLLIAQTIVELPLAISSSTLFFLCCYFCCGFETSARVAGVFYLNYILFSMYYLSFGLWLLYSAPDLQTAAVFVAFLYSFTASFCGVMQPYSLFPRFWTFMYRVSPYTYFIETFVSLLLHDREVNCSTSEMVPSQPVMGQTCGQFMKPFIDEFGGKLHINNTYTVCAYCMYTVGDDFLAQENMSYHHRWRNFGFEWVFVCFNIAAMFVGFYLTYIKKIWPSVIDGIKKCIPSMRRSKTSHNPNEQSV.

The Cytoplasmic segment spans residues 2 to 388 (SLSKYFNPIP…IGDRNYLISQ (387 aa)). An ABC transporter 1 domain is found at 31–273 (VQNDEESASE…FHDTLQIKKN (243 aa)). Residues 389–409 (FVSVVVQSLVIGSLFYNIPLT) traverse the membrane as a helical segment. Residues 410–418 (TIGSFSRGS) lie on the Extracellular side of the membrane. Residues 419–439 (LTFFSILFFTFLSLADMPASF) traverse the membrane as a helical segment. The Cytoplasmic segment spans residues 440–471 (QRQPVVRKHVQLHFYYNWVETLATNFFDCCSK). A helical membrane pass occupies residues 472–492 (FILVVIFTIILYFLAHLQYNA). Over 493–494 (AR) the chain is Extracellular. The helical transmembrane segment at 495–515 (FFIFLLFLSVYNFCMVSLFAL) threads the bilayer. At 516–524 (TALIAPTLS) the chain is on the cytoplasmic side. The chain crosses the membrane as a helical span at residues 525 to 545 (MANLLAGILLLAIAMYASYVI). The Extracellular segment spans residues 546–636 (YMKDMHPWFI…YTYHHVWRNF (91 aa)). Asn-595 carries an N-linked (GlcNAc...) asparagine glycan. The helical transmembrane segment at 637-657 (GIIIGFLCFFLFCSLLAAEYI) threads the bilayer. At 658 to 1090 (TPLFTRENLL…QYICTKRDMT (433 aa)) the chain is on the cytoplasmic side. The ABC transporter 2 domain maps to 751 to 979 (ISWKNINYTI…FVAHDRRLTF (229 aa)). 782-789 (GESGAGKT) contributes to the ATP binding site. Residues 1091–1111 (YVFAKYALNAGAGLFIGFSFW) traverse the membrane as a helical segment. Residues 1112–1117 (RTKHNI) lie on the Extracellular side of the membrane. A helical transmembrane segment spans residues 1118-1138 (NGLQDAIFLCFMMLCVSSPLI). Residues 1139–1175 (NQVQDKALQSKEVYIAREARSNTYHWTVLLIAQTIVE) lie on the Cytoplasmic side of the membrane. Residues 1176–1196 (LPLAISSSTLFFLCCYFCCGF) form a helical membrane-spanning segment. Topologically, residues 1197 to 1204 (ETSARVAG) are extracellular. The chain crosses the membrane as a helical span at residues 1205–1225 (VFYLNYILFSMYYLSFGLWLL). Over 1226–1230 (YSAPD) the chain is Cytoplasmic. The chain crosses the membrane as a helical span at residues 1231–1251 (LQTAAVFVAFLYSFTASFCGV). Residues 1252-1355 (MQPYSLFPRF…NMSYHHRWRN (104 aa)) lie on the Extracellular side of the membrane. Asn-1289, Asn-1324, and Asn-1346 each carry an N-linked (GlcNAc...) asparagine glycan. The helical transmembrane segment at 1356–1376 (FGFEWVFVCFNIAAMFVGFYL) threads the bilayer. The Cytoplasmic portion of the chain corresponds to 1377–1411 (TYIKKIWPSVIDGIKKCIPSMRRSKTSHNPNEQSV).

The protein belongs to the ABC transporter superfamily. ABCG family. PDR (TC 3.A.1.205) subfamily.

The protein resides in the membrane. Its function is as follows. Transporter involved in the uptake of sterol. The sequence is that of ATP-dependent permease PDR11 (PDR11) from Saccharomyces cerevisiae (strain ATCC 204508 / S288c) (Baker's yeast).